A 260-amino-acid polypeptide reads, in one-letter code: tRNA pseudouridine synthase A (260 aa).

D52 functions as the Nucleophile in the catalytic mechanism. Y111 is a substrate binding site.

This sequence belongs to the tRNA pseudouridine synthase TruA family. In terms of assembly, homodimer.

It catalyses the reaction uridine(38/39/40) in tRNA = pseudouridine(38/39/40) in tRNA. In terms of biological role, formation of pseudouridine at positions 38, 39 and 40 in the anticodon stem and loop of transfer RNAs. This chain is tRNA pseudouridine synthase A, found in Beijerinckia indica subsp. indica (strain ATCC 9039 / DSM 1715 / NCIMB 8712).